Consider the following 72-residue polypeptide: ATP synthase subunit c (72 aa).

The next 2 membrane-spanning stretches (helical) occupy residues 5-25 and 51-71; these read LLAA…IGIA and AGLS…LLFV.

Belongs to the ATPase C chain family. F-type ATPases have 2 components, F(1) - the catalytic core - and F(0) - the membrane proton channel. F(1) has five subunits: alpha(3), beta(3), gamma(1), delta(1), epsilon(1). F(0) has three main subunits: a(1), b(2) and c(10-14). The alpha and beta chains form an alternating ring which encloses part of the gamma chain. F(1) is attached to F(0) by a central stalk formed by the gamma and epsilon chains, while a peripheral stalk is formed by the delta and b chains.

It localises to the cell membrane. F(1)F(0) ATP synthase produces ATP from ADP in the presence of a proton or sodium gradient. F-type ATPases consist of two structural domains, F(1) containing the extramembraneous catalytic core and F(0) containing the membrane proton channel, linked together by a central stalk and a peripheral stalk. During catalysis, ATP synthesis in the catalytic domain of F(1) is coupled via a rotary mechanism of the central stalk subunits to proton translocation. Its function is as follows. Key component of the F(0) channel; it plays a direct role in translocation across the membrane. A homomeric c-ring of between 10-14 subunits forms the central stalk rotor element with the F(1) delta and epsilon subunits. This Clostridium perfringens (strain ATCC 13124 / DSM 756 / JCM 1290 / NCIMB 6125 / NCTC 8237 / Type A) protein is ATP synthase subunit c.